We begin with the raw amino-acid sequence, 176 residues long: Ribosome maturation factor RimM (176 aa).

The PRC barrel domain maps to 101–173; it reads EGEYYHYRLI…RMVVDLPEGL (73 aa).

The protein belongs to the RimM family. In terms of assembly, binds ribosomal protein uS19.

It localises to the cytoplasm. Functionally, an accessory protein needed during the final step in the assembly of 30S ribosomal subunit, possibly for assembly of the head region. Essential for efficient processing of 16S rRNA. May be needed both before and after RbfA during the maturation of 16S rRNA. It has affinity for free ribosomal 30S subunits but not for 70S ribosomes. In Syntrophobacter fumaroxidans (strain DSM 10017 / MPOB), this protein is Ribosome maturation factor RimM.